A 145-amino-acid chain; its full sequence is UPF0201 protein M164_1168 (145 aa).

This sequence belongs to the UPF0201 family.

The protein is UPF0201 protein M164_1168 of Saccharolobus islandicus (strain M.16.4 / Kamchatka #3) (Sulfolobus islandicus).